We begin with the raw amino-acid sequence, 505 residues long: MQDNPSIQFDDQRLAKRQQLIEAGVPMYPHEFRRSHTIAEIRAKYSQAGHDPSSDQVITAGRLYGVRDHGKTFFADLRDETGRIQLYIRKDALPEGKFQMFKSSIERGDIIGVTGRIFKTKVGEISIFVDDIILLTKTLCSLPEKFHGLTNLEKRYRQRYLDLIVNEESRETFRTRSRIISLLRNYLTGQGFLEFETPTLQPLYGGANARPFTTFHNFLGQKLYLRIAPELYLKRLVVGGFEKVFEVAKNFRNEDIDTSHNPEFSMVEIYQAYADYTDMMKLTEGIISSIVHEVTGSYEVAFEENTISYKAPWTVMSMEEAVRTIGKVDIFAHDLESLKKIGKEKGVDGIDDVHTQREMLVLFFEALVEDKLIQPTFITDFPVENSPLAKSHREKEGFVERFELFIAGMELANGFSELNDPLDQMERFEAQEEKRRLGDEEAQMHDYDFVNALGYGMPPTGGVGIGIDRLVMLITGNTSIKEVILFPSMKREVTTPADEEEPSSV.

Positions 403 and 410 each coordinate Mg(2+).

The protein belongs to the class-II aminoacyl-tRNA synthetase family. In terms of assembly, homodimer. The cofactor is Mg(2+).

The protein resides in the cytoplasm. It catalyses the reaction tRNA(Lys) + L-lysine + ATP = L-lysyl-tRNA(Lys) + AMP + diphosphate. In Methanospirillum hungatei JF-1 (strain ATCC 27890 / DSM 864 / NBRC 100397 / JF-1), this protein is Lysine--tRNA ligase.